The sequence spans 630 residues: Triacylglycerol lipase ptl2 (630 aa).

A PNPLA domain is found at 251-442 (LCLSGGASFA…RTDIPLSELR (192 aa)). A GXSXG motif is present at residues 282–286 (GTSGG). Ser-284 (nucleophile) is an active-site residue. Asp-429 (proton acceptor) is an active-site residue.

This sequence belongs to the PLPL family.

It localises to the lipid droplet. The enzyme catalyses a triacylglycerol + H2O = a diacylglycerol + a fatty acid + H(+). Its function is as follows. Lipid particle-localized triacylglycerol (TAG) lipase. The lipid droplet/particle is a lipid storage compartment which serves as a depot of energy and building blocks for membrane lipid biosynthesis. Involved in the mobilization of the non-polar storage lipids triacylglycerols (TAGs) from lipid particles by hydrolysis of TAGs, releasing and supplying specific fatty acids to the appropriate metabolic pathways. The sequence is that of Triacylglycerol lipase ptl2 (ptl2) from Schizosaccharomyces pombe (strain 972 / ATCC 24843) (Fission yeast).